The primary structure comprises 205 residues: MVKIKVCGIRREEDIEIVNKYKPNYVGFVFAKSKRQVDMYKAEKLADKLDVSIKKVGVFVNEDIEKVKEVSFRVKLDIVQLHGDENEEYIDKLKGFKVWKAVNVTAGKDVEKFKNYRIDAFLVDGYDGTNRGGTGKSFNWNLLKENQDKILKPIIAAGGLNIDNVEKCIEVLNPFAVDVSSGVETDGFKDEEKIKKFIMRVRKFK.

It belongs to the TrpF family.

The enzyme catalyses N-(5-phospho-beta-D-ribosyl)anthranilate = 1-(2-carboxyphenylamino)-1-deoxy-D-ribulose 5-phosphate. It participates in amino-acid biosynthesis; L-tryptophan biosynthesis; L-tryptophan from chorismate: step 3/5. In Clostridium acetobutylicum (strain ATCC 824 / DSM 792 / JCM 1419 / IAM 19013 / LMG 5710 / NBRC 13948 / NRRL B-527 / VKM B-1787 / 2291 / W), this protein is N-(5'-phosphoribosyl)anthranilate isomerase.